A 246-amino-acid polypeptide reads, in one-letter code: Pyridoxine 5'-phosphate synthase (246 aa).

2 residues coordinate 3-amino-2-oxopropyl phosphate: N8 and R19. The Proton acceptor role is filled by H44. Residues R46 and H51 each coordinate 1-deoxy-D-xylulose 5-phosphate. E76 serves as the catalytic Proton acceptor. T106 serves as a coordination point for 1-deoxy-D-xylulose 5-phosphate. The active-site Proton donor is the H198. 3-amino-2-oxopropyl phosphate is bound by residues D199 and 221–222 (GH).

This sequence belongs to the PNP synthase family. In terms of assembly, homooctamer; tetramer of dimers.

Its subcellular location is the cytoplasm. The catalysed reaction is 3-amino-2-oxopropyl phosphate + 1-deoxy-D-xylulose 5-phosphate = pyridoxine 5'-phosphate + phosphate + 2 H2O + H(+). The protein operates within cofactor biosynthesis; pyridoxine 5'-phosphate biosynthesis; pyridoxine 5'-phosphate from D-erythrose 4-phosphate: step 5/5. Functionally, catalyzes the complicated ring closure reaction between the two acyclic compounds 1-deoxy-D-xylulose-5-phosphate (DXP) and 3-amino-2-oxopropyl phosphate (1-amino-acetone-3-phosphate or AAP) to form pyridoxine 5'-phosphate (PNP) and inorganic phosphate. In Brucella suis (strain ATCC 23445 / NCTC 10510), this protein is Pyridoxine 5'-phosphate synthase.